Consider the following 412-residue polypeptide: Serine hydroxymethyltransferase (412 aa).

(6S)-5,6,7,8-tetrahydrofolate-binding positions include Leu-117 and 121 to 123 (GHL). Lys-226 is subject to N6-(pyridoxal phosphate)lysine. (6S)-5,6,7,8-tetrahydrofolate-binding positions include Glu-242 and 350 to 352 (SPF).

Belongs to the SHMT family. Homodimer. Pyridoxal 5'-phosphate serves as cofactor.

The protein localises to the cytoplasm. The catalysed reaction is (6R)-5,10-methylene-5,6,7,8-tetrahydrofolate + glycine + H2O = (6S)-5,6,7,8-tetrahydrofolate + L-serine. Its pathway is one-carbon metabolism; tetrahydrofolate interconversion. It functions in the pathway amino-acid biosynthesis; glycine biosynthesis; glycine from L-serine: step 1/1. Catalyzes the reversible interconversion of serine and glycine with tetrahydrofolate (THF) serving as the one-carbon carrier. Also exhibits THF-independent aldolase activity toward beta-hydroxyamino acids, producing glycine and aldehydes, via a retro-aldol mechanism. The chain is Serine hydroxymethyltransferase from Methanosarcina mazei (strain ATCC BAA-159 / DSM 3647 / Goe1 / Go1 / JCM 11833 / OCM 88) (Methanosarcina frisia).